The sequence spans 358 residues: Peptide chain release factor 2 (358 aa).

Gln-242 carries the N5-methylglutamine modification.

This sequence belongs to the prokaryotic/mitochondrial release factor family. Post-translationally, methylated by PrmC. Methylation increases the termination efficiency of RF2.

The protein resides in the cytoplasm. Functionally, peptide chain release factor 2 directs the termination of translation in response to the peptide chain termination codons UGA and UAA. This chain is Peptide chain release factor 2 (prfB), found in Borreliella burgdorferi (strain ATCC 35210 / DSM 4680 / CIP 102532 / B31) (Borrelia burgdorferi).